The chain runs to 593 residues: Alanine--tRNA ligase (593 aa).

The Zn(2+) site is built by histidine 456, histidine 460, cysteine 558, and histidine 562.

Belongs to the class-II aminoacyl-tRNA synthetase family. Requires Zn(2+) as cofactor.

The protein localises to the cytoplasm. It carries out the reaction tRNA(Ala) + L-alanine + ATP = L-alanyl-tRNA(Ala) + AMP + diphosphate. Catalyzes the attachment of alanine to tRNA(Ala) in a two-step reaction: alanine is first activated by ATP to form Ala-AMP and then transferred to the acceptor end of tRNA(Ala). Also edits incorrectly charged Ser-tRNA(Ala) and Gly-tRNA(Ala) via its editing domain. This is Alanine--tRNA ligase (alaS) from Borrelia hermsii (strain HS1 / DAH).